The following is a 328-amino-acid chain: dITP/XTP pyrophosphatase (328 aa).

Positions 1-129 (MSEKIYEYKD…ATSEQGFGDI (129 aa)) are unknown. The segment at 130–324 (ILIATRNEGK…KLMEVFPAWQ (195 aa)) is NTP pyrophosphatase. 134–139 (TRNEGK) contacts substrate. The active-site Proton acceptor is Asp-196. Position 196 (Asp-196) interacts with Mg(2+). Substrate is bound by residues Ser-197, 280–283 (FGYD), Lys-303, and 308–309 (HR).

It belongs to the HAM1 NTPase family. Homodimer. The cofactor is Mg(2+).

The catalysed reaction is XTP + H2O = XMP + diphosphate + H(+). The enzyme catalyses dITP + H2O = dIMP + diphosphate + H(+). It carries out the reaction ITP + H2O = IMP + diphosphate + H(+). In terms of biological role, pyrophosphatase that catalyzes the hydrolysis of nucleoside triphosphates to their monophosphate derivatives, with a high preference for the non-canonical purine nucleotides XTP (xanthosine triphosphate), dITP (deoxyinosine triphosphate) and ITP. Seems to function as a house-cleaning enzyme that removes non-canonical purine nucleotides from the nucleotide pool, thus preventing their incorporation into DNA/RNA and avoiding chromosomal lesions. The protein is dITP/XTP pyrophosphatase of Streptococcus pyogenes serotype M3 (strain ATCC BAA-595 / MGAS315).